Reading from the N-terminus, the 46-residue chain is Amine oxidase [flavin-containing] A (46 aa).

Belongs to the flavin monoamine oxidase family. Monomer, homo- or heterodimer (containing two subunits of similar size). Each subunit contains a covalently bound flavin. Enzymatically active as monomer. FAD is required as a cofactor.

Its subcellular location is the mitochondrion outer membrane. It catalyses the reaction a secondary aliphatic amine + O2 + H2O = a primary amine + an aldehyde + H2O2. The catalysed reaction is a primary methyl amine + O2 + H2O = an aldehyde + H2O2 + NH4(+). The enzyme catalyses (R)-adrenaline + O2 + H2O = (R)-3,4-dihydroxymandelaldehyde + methylamine + H2O2. It carries out the reaction dopamine + O2 + H2O = 3,4-dihydroxyphenylacetaldehyde + H2O2 + NH4(+). It catalyses the reaction tyramine + O2 + H2O = (4-hydroxyphenyl)acetaldehyde + H2O2 + NH4(+). The catalysed reaction is (R)-noradrenaline + O2 + H2O = (R)-3,4-dihydroxymandelaldehyde + H2O2 + NH4(+). The enzyme catalyses serotonin + O2 + H2O = (5-hydroxyindol-3-yl)acetaldehyde + H2O2 + NH4(+). It carries out the reaction kynuramine + O2 + H2O = 3-(2-aminophenyl)-3-oxopropanal + H2O2 + NH4(+). It catalyses the reaction tryptamine + O2 + H2O = indole-3-acetaldehyde + H2O2 + NH4(+). The catalysed reaction is 2-phenylethylamine + O2 + H2O = 2-phenylacetaldehyde + H2O2 + NH4(+). Catalyzes the oxidative deamination of primary and some secondary amine such as neurotransmitters, with concomitant reduction of oxygen to hydrogen peroxide and has important functions in the metabolism of neuroactive and vasoactive amines in the central nervous system and peripheral tissues. Preferentially oxidizes serotonin. Also catalyzes the oxidative deamination of kynuramine to 3-(2-aminophenyl)-3-oxopropanal that can spontaneously condense to 4-hydroxyquinoline. This is Amine oxidase [flavin-containing] A from Ovis aries (Sheep).